The primary structure comprises 209 residues: Kynurenine formamidase (209 aa).

Trp-20 is a binding site for substrate. Zn(2+)-binding residues include His-50, His-54, and Asp-56. His-60 serves as the catalytic Proton donor/acceptor. Residues His-161 and Glu-173 each coordinate Zn(2+).

This sequence belongs to the Cyclase 1 superfamily. KynB family. Homodimer. Zn(2+) serves as cofactor.

It carries out the reaction N-formyl-L-kynurenine + H2O = L-kynurenine + formate + H(+). Its pathway is amino-acid degradation; L-tryptophan degradation via kynurenine pathway; L-kynurenine from L-tryptophan: step 2/2. Its function is as follows. Catalyzes the hydrolysis of N-formyl-L-kynurenine to L-kynurenine, the second step in the kynurenine pathway of tryptophan degradation. The chain is Kynurenine formamidase from Bacillus thuringiensis subsp. konkukian (strain 97-27).